Here is a 253-residue protein sequence, read N- to C-terminus: Probable U3 small nucleolar RNA-associated protein 11 (253 aa).

Residues 1 to 21 (MAAAFRKAVKSRQREYRERSQ) form a disordered region. Glycyl lysine isopeptide (Lys-Gly) (interchain with G-Cter in SUMO2) cross-links involve residues lysine 74, lysine 83, and lysine 86. Position 90 is a phosphothreonine (threonine 90). Glycyl lysine isopeptide (Lys-Gly) (interchain with G-Cter in SUMO2) cross-links involve residues lysine 103, lysine 120, lysine 143, lysine 144, lysine 180, lysine 211, lysine 218, lysine 235, and lysine 236. Serine 241 carries the phosphoserine modification. Residue lysine 246 forms a Glycyl lysine isopeptide (Lys-Gly) (interchain with G-Cter in SUMO2) linkage.

The protein belongs to the UTP11 family. As to quaternary structure, part of the small subunit (SSU) processome, composed of more than 70 proteins and the RNA chaperone small nucleolar RNA (snoRNA) U3.

The protein localises to the nucleus. It is found in the nucleolus. Functionally, part of the small subunit (SSU) processome, first precursor of the small eukaryotic ribosomal subunit. During the assembly of the SSU processome in the nucleolus, many ribosome biogenesis factors, an RNA chaperone and ribosomal proteins associate with the nascent pre-rRNA and work in concert to generate RNA folding, modifications, rearrangements and cleavage as well as targeted degradation of pre-ribosomal RNA by the RNA exosome. Involved in nucleolar processing of pre-18S ribosomal RNA. In Rattus norvegicus (Rat), this protein is Probable U3 small nucleolar RNA-associated protein 11.